Consider the following 109-residue polypeptide: Con-Ins K2 (109 aa).

The signal sequence occupies residues 1 to 24 (MTTSSYFLLVALGLLLYVCQSSFG). Residues 25-29 (NPHTR) constitute a propeptide that is removed on maturation. 3 cysteine pairs are disulfide-bonded: Cys-41–Cys-90, Cys-53–Cys-103, and Cys-89–Cys-94. At Glu-44 the chain carries 4-carboxyglutamate. A propeptide spans 57–83 (RKRRGFPSMLKARAKRNEAFLLQRDGR) (c peptide).

Belongs to the insulin family. In terms of assembly, heterodimer of A and B chains; disulfide-linked. As to expression, expressed by the venom gland.

The protein resides in the secreted. In terms of biological role, this venom insulin, from a fish-hunting cone snail, facilitates prey capture by rapidly inducing hypoglycemic shock. It is one of the smallest known insulin found in nature and lacks the C-terminal segment of the B chain that, in human insulin, mediates engagement of the insulin receptor (INSR) and assembly of the hormone's hexameric storage form. Despite lacking this segment, it both binds and activates human insulin receptor (long isoform (HIR-B)) with a moderate potency (EC(50)=373.2 nM). In vivo, intraperitoneal injection of this peptide into zebrafish lowers blood glucose with a lower potency than human insulin. In addition, when applied to water, this peptide reduces overall locomotor activity of zebrafish larvae, observed as a significant decrease in the percentage of time spent swimming and movement frequency. When tested on a mouse model of diabetes, this insulin also lowers blood glucose with a 20-fold lower potency than human insulin. The protein is Con-Ins K2 of Conus kinoshitai (Kinoshita's cone).